The primary structure comprises 143 residues: Large ribosomal subunit protein uL13 (143 aa).

This sequence belongs to the universal ribosomal protein uL13 family. Part of the 50S ribosomal subunit.

In terms of biological role, this protein is one of the early assembly proteins of the 50S ribosomal subunit, although it is not seen to bind rRNA by itself. It is important during the early stages of 50S assembly. The polypeptide is Large ribosomal subunit protein uL13 (Dehalococcoides mccartyi (strain CBDB1)).